The primary structure comprises 392 residues: Speckle-type POZ protein-like (392 aa).

The MATH domain maps to Lys31–Val161. A BTB domain is found at Thr200–Asp267.

It belongs to the Tdpoz family. As to quaternary structure, homodimer. Heterodimer with SPOP. Component of cullin-RING-based BCR (BTB-CUL3-RBX1) E3 ubiquitin-protein ligase complexes containing homodimeric SPOPL or the heterodimer formed by SPOP and SPOPL. Interacts with CUL3 and MACROH2A1.

The protein resides in the nucleus. The protein operates within protein modification; protein ubiquitination. Functionally, component of a cullin-RING-based BCR (BTB-CUL3-RBX1) E3 ubiquitin-protein ligase complex that mediates the ubiquitination and subsequent proteasomal degradation of target proteins, but with relatively low efficiency. Cullin-RING-based BCR (BTB-CUL3-RBX1) E3 ubiquitin-protein ligase complexes containing homodimeric SPOPL or the heterodimer formed by SPOP and SPOPL are less efficient than ubiquitin ligase complexes containing only SPOP. May function to down-regulate the activity of cullin-RING-based BCR (BTB-CUL3-RBX1) E3 ubiquitin-protein ligase complexes that contain SPOP. The sequence is that of Speckle-type POZ protein-like (SPOPL) from Homo sapiens (Human).